We begin with the raw amino-acid sequence, 378 residues long: Mitogen-activated protein kinase mpkC (378 aa).

In terms of domain architecture, Protein kinase spans Y20–L300. ATP contacts are provided by residues I26–V34 and K49. The Proton acceptor role is filled by D141. T171 carries the post-translational modification Phosphothreonine. Residues T171 to Y173 carry the TXY motif. Y173 carries the phosphotyrosine modification.

It belongs to the protein kinase superfamily. Ser/Thr protein kinase family. MAP kinase subfamily. HOG1 sub-subfamily. Interacts with sakA upon osmotic and cell wall stresses. Requires Mg(2+) as cofactor. Dually phosphorylated on Thr-171 and Tyr-173, which activates the enzyme.

It is found in the cytoplasm. The protein localises to the nucleus. It carries out the reaction L-seryl-[protein] + ATP = O-phospho-L-seryl-[protein] + ADP + H(+). The enzyme catalyses L-threonyl-[protein] + ATP = O-phospho-L-threonyl-[protein] + ADP + H(+). Its activity is regulated as follows. Activated by tyrosine and threonine phosphorylation. Functionally, mitogen-activated protein kinase; part of an osmotic and general signal pathways involved in regulation of the response to the cell wall damage, oxidative stress, drug resistance, and establishment of infection. Required for growth on media where sorbitol or mannitol is the sole carbon source. With sakA, plays a redundant or cooperative role in the conidial stress resistance. Also plays a supportive role in osmotic stress adaptation when sakA is deficient. Involved in paradoxical growth, the cell wall integrity (CWI) pathway and biofilm formation. Acts by modulating sakA activity upon exposure to several types o stresses and during cell wall biosynthesis. Also collaborates with sakA to allow ful virulence in a neutropenic murine model of invasive pulmonary aspergillosis. MpkC and sakA have both independent and collaborative functions during the transcriptional response to transient osmotic stress, and mpkC plays a major role in the modulation of the response to DNA metabolism while activating mitochondrial functions and cation transport. This Aspergillus fumigatus (strain ATCC MYA-4609 / CBS 101355 / FGSC A1100 / Af293) (Neosartorya fumigata) protein is Mitogen-activated protein kinase mpkC (mpkC).